The sequence spans 312 residues: Probable carboxylesterase 7 (312 aa).

Residue M1 is modified to N-acetylmethionine. An Involved in the stabilization of the negatively charged intermediate by the formation of the oxyanion hole motif is present at residues H75–G77. Residues S159, D255, and H287 contribute to the active site.

The protein belongs to the 'GDXG' lipolytic enzyme family. In terms of tissue distribution, expressed in leaves, stems, flowers and siliques.

The catalysed reaction is a carboxylic ester + H2O = an alcohol + a carboxylate + H(+). In terms of biological role, carboxylesterase acting on esters with varying acyl chain length. This chain is Probable carboxylesterase 7 (CXE7), found in Arabidopsis thaliana (Mouse-ear cress).